The sequence spans 686 residues: Translation initiation factor IF-2 (686 aa).

Residues 61–98 are disordered; sequence FEVEEKVVRSKKNSNKKKKKGKGNEDKRQENFAGRQQT. Positions 69–81 are enriched in basic residues; it reads RSKKNSNKKKKKG. The 170-residue stretch at 188-357 folds into the tr-type G domain; it reads ERPAVVTIMG…LLVSEVEEYK (170 aa). The interval 197 to 204 is G1; that stretch reads GHVDHGKT. Residue 197-204 participates in GTP binding; it reads GHVDHGKT. A G2 region spans residues 222-226; sequence GITQH. The G3 stretch occupies residues 243–246; sequence DTPG. GTP-binding positions include 243 to 247 and 297 to 300; these read DTPGH and NKMD. Residues 297 to 300 form a G4 region; sequence NKMD. The G5 stretch occupies residues 333 to 335; the sequence is SAI.

Belongs to the TRAFAC class translation factor GTPase superfamily. Classic translation factor GTPase family. IF-2 subfamily.

It is found in the cytoplasm. Functionally, one of the essential components for the initiation of protein synthesis. Protects formylmethionyl-tRNA from spontaneous hydrolysis and promotes its binding to the 30S ribosomal subunits. Also involved in the hydrolysis of GTP during the formation of the 70S ribosomal complex. This chain is Translation initiation factor IF-2, found in Bacillus cereus (strain B4264).